Here is a 335-residue protein sequence, read N- to C-terminus: DNA-directed RNA polymerase subunit alpha (335 aa).

The segment at 1 to 233 (MTRTANEFLT…QQIAIFVDLQ (233 aa)) is alpha N-terminal domain (alpha-NTD). The tract at residues 247–335 (VDPILLRPVD…MDDRFAYRSR (89 aa)) is alpha C-terminal domain (alpha-CTD).

The protein belongs to the RNA polymerase alpha chain family. In terms of assembly, homodimer. The RNAP catalytic core consists of 2 alpha, 1 beta, 1 beta' and 1 omega subunit. When a sigma factor is associated with the core the holoenzyme is formed, which can initiate transcription.

It carries out the reaction RNA(n) + a ribonucleoside 5'-triphosphate = RNA(n+1) + diphosphate. Functionally, DNA-dependent RNA polymerase catalyzes the transcription of DNA into RNA using the four ribonucleoside triphosphates as substrates. The sequence is that of DNA-directed RNA polymerase subunit alpha from Acinetobacter baylyi (strain ATCC 33305 / BD413 / ADP1).